We begin with the raw amino-acid sequence, 203 residues long: ATP-dependent Clp protease proteolytic subunit 2 (203 aa).

Ser98 (nucleophile) is an active-site residue. His123 is a catalytic residue.

The protein belongs to the peptidase S14 family. Fourteen ClpP subunits assemble into 2 heptameric rings which stack back to back to give a disk-like structure with a central cavity, resembling the structure of eukaryotic proteasomes.

It localises to the cytoplasm. It catalyses the reaction Hydrolysis of proteins to small peptides in the presence of ATP and magnesium. alpha-casein is the usual test substrate. In the absence of ATP, only oligopeptides shorter than five residues are hydrolyzed (such as succinyl-Leu-Tyr-|-NHMec, and Leu-Tyr-Leu-|-Tyr-Trp, in which cleavage of the -Tyr-|-Leu- and -Tyr-|-Trp bonds also occurs).. Functionally, cleaves peptides in various proteins in a process that requires ATP hydrolysis. Has a chymotrypsin-like activity. Plays a major role in the degradation of misfolded proteins. This is ATP-dependent Clp protease proteolytic subunit 2 from Chlamydia trachomatis serovar A (strain ATCC VR-571B / DSM 19440 / HAR-13).